A 105-amino-acid polypeptide reads, in one-letter code: Large ribosomal subunit protein bL21 (105 aa).

The protein belongs to the bacterial ribosomal protein bL21 family. Part of the 50S ribosomal subunit. Contacts protein L20.

Its function is as follows. This protein binds to 23S rRNA in the presence of protein L20. The polypeptide is Large ribosomal subunit protein bL21 (Parafrankia sp. (strain EAN1pec)).